The primary structure comprises 103 residues: Large ribosomal subunit protein uL24 (103 aa).

Belongs to the universal ribosomal protein uL24 family. In terms of assembly, part of the 50S ribosomal subunit.

In terms of biological role, one of two assembly initiator proteins, it binds directly to the 5'-end of the 23S rRNA, where it nucleates assembly of the 50S subunit. Its function is as follows. One of the proteins that surrounds the polypeptide exit tunnel on the outside of the subunit. In Treponema pallidum (strain Nichols), this protein is Large ribosomal subunit protein uL24.